Here is a 165-residue protein sequence, read N- to C-terminus: MYIEMIDETGQVSAQMQEQITELLQFAAEKIGKQNKEMAVTFVDNKRVHEVNLEYRGIDRPTDVVSLEYKPESEIVFDEEDLLDNPELAEMMEDFDAYIGELYISIDKAREQAEDYGHSYEREMGFLAVHGFLHINGYDHYTPEEEAEMFGLQEEILTAYGLTRE.

Zn(2+)-binding residues include His130, His134, and His140.

Belongs to the endoribonuclease YbeY family. Zn(2+) is required as a cofactor.

It is found in the cytoplasm. Functionally, single strand-specific metallo-endoribonuclease involved in late-stage 70S ribosome quality control and in maturation of the 3' terminus of the 16S rRNA. In Streptococcus suis (strain 98HAH33), this protein is Endoribonuclease YbeY.